A 248-amino-acid polypeptide reads, in one-letter code: ATP synthase subunit a, chloroplastic (248 aa).

The next 5 membrane-spanning stretches (helical) occupy residues 35 to 55, 94 to 114, 133 to 153, 202 to 222, and 224 to 244; these read GQVF…SFLG, VPYI…GALI, INTT…AGLS, VFTL…GLFA, and SIQA…AMEG.

Belongs to the ATPase A chain family. As to quaternary structure, F-type ATPases have 2 components, CF(1) - the catalytic core - and CF(0) - the membrane proton channel. CF(1) has five subunits: alpha(3), beta(3), gamma(1), delta(1), epsilon(1). CF(0) has four main subunits: a, b, b' and c.

The protein localises to the plastid. Its subcellular location is the chloroplast thylakoid membrane. Functionally, key component of the proton channel; it plays a direct role in the translocation of protons across the membrane. The sequence is that of ATP synthase subunit a, chloroplastic from Porphyra purpurea (Red seaweed).